The chain runs to 220 residues: Thymidylate kinase (220 aa).

Position 10–17 (10–17 (GIDGCGKS)) interacts with ATP.

The protein belongs to the thymidylate kinase family.

It carries out the reaction dTMP + ATP = dTDP + ADP. Phosphorylation of dTMP to form dTDP in both de novo and salvage pathways of dTTP synthesis. The sequence is that of Thymidylate kinase from Prochlorococcus marinus (strain SARG / CCMP1375 / SS120).